The chain runs to 340 residues: GTP 3',8-cyclase (340 aa).

A Radical SAM core domain is found at K8–E227. Residue R17 participates in GTP binding. [4Fe-4S] cluster-binding residues include C24 and C28. Y30 serves as a coordination point for S-adenosyl-L-methionine. C31 serves as a coordination point for [4Fe-4S] cluster. R71 provides a ligand contact to GTP. G75 contacts S-adenosyl-L-methionine. Residue T102 participates in GTP binding. An S-adenosyl-L-methionine-binding site is contributed by S126. K163 contacts GTP. M197 serves as a coordination point for S-adenosyl-L-methionine. Residues C261 and C264 each coordinate [4Fe-4S] cluster. Residue R266–R268 coordinates GTP. C278 contacts [4Fe-4S] cluster.

Belongs to the radical SAM superfamily. MoaA family. As to quaternary structure, monomer and homodimer. [4Fe-4S] cluster serves as cofactor.

The catalysed reaction is GTP + AH2 + S-adenosyl-L-methionine = (8S)-3',8-cyclo-7,8-dihydroguanosine 5'-triphosphate + 5'-deoxyadenosine + L-methionine + A + H(+). It participates in cofactor biosynthesis; molybdopterin biosynthesis. Functionally, catalyzes the cyclization of GTP to (8S)-3',8-cyclo-7,8-dihydroguanosine 5'-triphosphate. The chain is GTP 3',8-cyclase from Staphylococcus haemolyticus (strain JCSC1435).